A 207-amino-acid polypeptide reads, in one-letter code: Imidazole glycerol phosphate synthase subunit HisH (207 aa).

The Glutamine amidotransferase type-1 domain occupies 1–207; it reads MIAIVDYNMG…ENFTKYRNLK (207 aa). The Nucleophile role is filled by Cys79. Catalysis depends on residues His185 and Glu187.

As to quaternary structure, heterodimer of HisH and HisF.

It is found in the cytoplasm. It catalyses the reaction 5-[(5-phospho-1-deoxy-D-ribulos-1-ylimino)methylamino]-1-(5-phospho-beta-D-ribosyl)imidazole-4-carboxamide + L-glutamine = D-erythro-1-(imidazol-4-yl)glycerol 3-phosphate + 5-amino-1-(5-phospho-beta-D-ribosyl)imidazole-4-carboxamide + L-glutamate + H(+). The enzyme catalyses L-glutamine + H2O = L-glutamate + NH4(+). Its pathway is amino-acid biosynthesis; L-histidine biosynthesis; L-histidine from 5-phospho-alpha-D-ribose 1-diphosphate: step 5/9. Functionally, IGPS catalyzes the conversion of PRFAR and glutamine to IGP, AICAR and glutamate. The HisH subunit catalyzes the hydrolysis of glutamine to glutamate and ammonia as part of the synthesis of IGP and AICAR. The resulting ammonia molecule is channeled to the active site of HisF. In Sulfurimonas denitrificans (strain ATCC 33889 / DSM 1251) (Thiomicrospira denitrificans (strain ATCC 33889 / DSM 1251)), this protein is Imidazole glycerol phosphate synthase subunit HisH.